The chain runs to 261 residues: Carnitinyl-CoA dehydratase (261 aa).

E111 functions as the Nucleophile in the catalytic mechanism. Residue E131 is the Proton acceptor of the active site.

Belongs to the enoyl-CoA hydratase/isomerase family.

It catalyses the reaction (R)-carnitinyl-CoA = crotonobetainyl-CoA + H2O. The protein operates within amine and polyamine metabolism; carnitine metabolism. Its function is as follows. Catalyzes the reversible dehydration of L-carnitinyl-CoA to crotonobetainyl-CoA. The polypeptide is Carnitinyl-CoA dehydratase (Salmonella paratyphi C (strain RKS4594)).